Consider the following 361-residue polypeptide: Glutaminyl-peptide cyclotransferase (361 aa).

The signal sequence occupies residues 1–28; sequence MAGGRHRRVVGTLHLLLLVAALPWASRG. A glycan (N-linked (GlcNAc...) asparagine) is linked at asparagine 49. Cysteine 139 and cysteine 164 are joined by a disulfide. Zn(2+) is bound at residue aspartate 159. Glutamate 201 acts as the Proton acceptor in catalysis. Residue glutamate 202 participates in Zn(2+) binding. Residue aspartate 248 is the Proton acceptor of the active site. An N-linked (GlcNAc...) asparagine glycan is attached at asparagine 296. Histidine 330 serves as a coordination point for Zn(2+).

It belongs to the glutaminyl-peptide cyclotransferase family.

Its subcellular location is the secreted. The enzyme catalyses N-terminal L-glutaminyl-[peptide] = N-terminal 5-oxo-L-prolyl-[peptide] + NH4(+). Functionally, responsible for the biosynthesis of pyroglutamyl peptides. Has a bias against acidic and tryptophan residues adjacent to the N-terminal glutaminyl residue and a lack of importance of chain length after the second residue. Also catalyzes N-terminal pyroglutamate formation. In vitro, catalyzes pyroglutamate formation of N-terminally truncated form of APP amyloid-beta peptides [Glu-3]-amyloid-beta. May be involved in the N-terminal pyroglutamate formation of several amyloid-related plaque-forming peptides. This chain is Glutaminyl-peptide cyclotransferase (QPCT), found in Homo sapiens (Human).